A 253-amino-acid chain; its full sequence is Putative ankyrin repeat protein NMB1133/NMB1171 (253 aa).

ANK repeat units lie at residues 196–225 (DGYT…NPAS) and 229–252 (EGYT…LEPR).

In Neisseria meningitidis serogroup B (strain ATCC BAA-335 / MC58), this protein is Putative ankyrin repeat protein NMB1133/NMB1171.